We begin with the raw amino-acid sequence, 290 residues long: 4-hydroxy-tetrahydrodipicolinate synthase (290 aa).

Position 44 (threonine 44) interacts with pyruvate. The active-site Proton donor/acceptor is tyrosine 132. The active-site Schiff-base intermediate with substrate is the lysine 160. Isoleucine 202 lines the pyruvate pocket.

This sequence belongs to the DapA family. Homotetramer; dimer of dimers.

It is found in the cytoplasm. The enzyme catalyses L-aspartate 4-semialdehyde + pyruvate = (2S,4S)-4-hydroxy-2,3,4,5-tetrahydrodipicolinate + H2O + H(+). It participates in amino-acid biosynthesis; L-lysine biosynthesis via DAP pathway; (S)-tetrahydrodipicolinate from L-aspartate: step 3/4. In terms of biological role, catalyzes the condensation of (S)-aspartate-beta-semialdehyde [(S)-ASA] and pyruvate to 4-hydroxy-tetrahydrodipicolinate (HTPA). In Geotalea uraniireducens (strain Rf4) (Geobacter uraniireducens), this protein is 4-hydroxy-tetrahydrodipicolinate synthase.